A 344-amino-acid polypeptide reads, in one-letter code: Uroporphyrinogen decarboxylase (344 aa).

Substrate contacts are provided by residues 26–30 (RQAGR), D76, Y152, S207, and H323.

This sequence belongs to the uroporphyrinogen decarboxylase family. In terms of assembly, homodimer.

It is found in the cytoplasm. The catalysed reaction is uroporphyrinogen III + 4 H(+) = coproporphyrinogen III + 4 CO2. The protein operates within porphyrin-containing compound metabolism; protoporphyrin-IX biosynthesis; coproporphyrinogen-III from 5-aminolevulinate: step 4/4. Its function is as follows. Catalyzes the decarboxylation of four acetate groups of uroporphyrinogen-III to yield coproporphyrinogen-III. This chain is Uroporphyrinogen decarboxylase, found in Hyphomonas neptunium (strain ATCC 15444).